The chain runs to 381 residues: Queuine tRNA-ribosyltransferase (381 aa).

Aspartate 92 (proton acceptor) is an active-site residue. Residues 92-96, aspartate 146, glutamine 190, and glycine 217 contribute to the substrate site; that span reads DSGGF. The interval 248-254 is RNA binding; it reads GVGRPED. The active-site Nucleophile is the aspartate 267. Residues 272–276 are RNA binding; important for wobble base 34 recognition; it reads TRNAR. 4 residues coordinate Zn(2+): cysteine 305, cysteine 307, cysteine 310, and histidine 337.

This sequence belongs to the queuine tRNA-ribosyltransferase family. Homodimer. Within each dimer, one monomer is responsible for RNA recognition and catalysis, while the other monomer binds to the replacement base PreQ1. Requires Zn(2+) as cofactor.

The enzyme catalyses 7-aminomethyl-7-carbaguanine + guanosine(34) in tRNA = 7-aminomethyl-7-carbaguanosine(34) in tRNA + guanine. Its pathway is tRNA modification; tRNA-queuosine biosynthesis. In terms of biological role, catalyzes the base-exchange of a guanine (G) residue with the queuine precursor 7-aminomethyl-7-deazaguanine (PreQ1) at position 34 (anticodon wobble position) in tRNAs with GU(N) anticodons (tRNA-Asp, -Asn, -His and -Tyr). Catalysis occurs through a double-displacement mechanism. The nucleophile active site attacks the C1' of nucleotide 34 to detach the guanine base from the RNA, forming a covalent enzyme-RNA intermediate. The proton acceptor active site deprotonates the incoming PreQ1, allowing a nucleophilic attack on the C1' of the ribose to form the product. After dissociation, two additional enzymatic reactions on the tRNA convert PreQ1 to queuine (Q), resulting in the hypermodified nucleoside queuosine (7-(((4,5-cis-dihydroxy-2-cyclopenten-1-yl)amino)methyl)-7-deazaguanosine). In Xanthomonas oryzae pv. oryzae (strain MAFF 311018), this protein is Queuine tRNA-ribosyltransferase.